Consider the following 41-residue polypeptide: Pi-stichotoxin-Hcr5a (41 aa).

Cystine bridges form between Cys4-Cys37, Cys6-Cys30, and Cys20-Cys38.

This sequence belongs to the sea anemone type 3 (BDS) potassium channel toxin family.

The protein resides in the secreted. Its subcellular location is the nematocyst. In terms of biological role, weakly inhibits human homomeric ASIC3 (IC(50)=5.5 uM). This Radianthus crispa (Leathery sea anemone) protein is Pi-stichotoxin-Hcr5a.